The chain runs to 880 residues: Alanine--tRNA ligase (880 aa).

Zn(2+) is bound by residues histidine 563, histidine 567, cysteine 665, and histidine 669.

The protein belongs to the class-II aminoacyl-tRNA synthetase family. Zn(2+) serves as cofactor.

The protein localises to the cytoplasm. The enzyme catalyses tRNA(Ala) + L-alanine + ATP = L-alanyl-tRNA(Ala) + AMP + diphosphate. Its function is as follows. Catalyzes the attachment of alanine to tRNA(Ala) in a two-step reaction: alanine is first activated by ATP to form Ala-AMP and then transferred to the acceptor end of tRNA(Ala). Also edits incorrectly charged Ser-tRNA(Ala) and Gly-tRNA(Ala) via its editing domain. This chain is Alanine--tRNA ligase, found in Desulforudis audaxviator (strain MP104C).